The sequence spans 184 residues: Bcl-2-modifying factor (184 aa).

Positions 67 to 75 (DKATQTLSP) are interaction with DLC2. A BH3 motif is present at residues 133 to 147 (IARKLQCIADQFHRL).

Belongs to the Bcl-2 family. Interacts with MCL1, BCL2, BCL2L1/BCL-Xl, BCL2A1 and BCL2L2/BCL-w. Interacts with the myosin V actin motor complex through its binding to DLC2. In terms of tissue distribution, isoform 1 is mainly expressed in B-lymphoid cells. Isoform 2 and isoform 3 are mainly expressed in B-CLL and normal B-cells.

May play a role in apoptosis. Isoform 1 seems to be the main initiator. This chain is Bcl-2-modifying factor (BMF), found in Homo sapiens (Human).